We begin with the raw amino-acid sequence, 122 residues long: Prefoldin subunit 1 (122 aa).

N-acetylalanine is present on A2.

This sequence belongs to the prefoldin subunit beta family. Heterohexamer of two PFD-alpha type and four PFD-beta type subunits.

Its function is as follows. Binds specifically to cytosolic chaperonin (c-CPN) and transfers target proteins to it. Binds to nascent polypeptide chain and promotes folding in an environment in which there are many competing pathways for nonnative proteins. This is Prefoldin subunit 1 (PFDN1) from Bos taurus (Bovine).